We begin with the raw amino-acid sequence, 56 residues long: MASKGGRDKIKLESTAGTGHFYTTTKNKRTMPEKMEIMKFDPVARKHVAYKETKIK.

Over residues Met-1–Leu-12 the composition is skewed to basic and acidic residues. Positions Met-1–Lys-28 are disordered. Residues Thr-15–Thr-25 show a composition bias toward polar residues.

This sequence belongs to the bacterial ribosomal protein bL33 family.

In Cupriavidus necator (strain ATCC 17699 / DSM 428 / KCTC 22496 / NCIMB 10442 / H16 / Stanier 337) (Ralstonia eutropha), this protein is Large ribosomal subunit protein bL33.